We begin with the raw amino-acid sequence, 139 residues long: Aspartate 1-decarboxylase (139 aa).

Residue Ser25 is the Schiff-base intermediate with substrate; via pyruvic acid of the active site. Ser25 carries the post-translational modification Pyruvic acid (Ser). Thr57 is a binding site for substrate. Catalysis depends on Tyr58, which acts as the Proton donor. Residue 73–75 (GAA) participates in substrate binding. The interval 116 to 139 (ELGSDPAHAPEGSGLTSPRSLTFA) is disordered. Residues 129–139 (GLTSPRSLTFA) show a composition bias toward polar residues.

Belongs to the PanD family. As to quaternary structure, heterooctamer of four alpha and four beta subunits. Pyruvate is required as a cofactor. Is synthesized initially as an inactive proenzyme, which is activated by self-cleavage at a specific serine bond to produce a beta-subunit with a hydroxyl group at its C-terminus and an alpha-subunit with a pyruvoyl group at its N-terminus.

The protein localises to the cytoplasm. The catalysed reaction is L-aspartate + H(+) = beta-alanine + CO2. It functions in the pathway cofactor biosynthesis; (R)-pantothenate biosynthesis; beta-alanine from L-aspartate: step 1/1. Its function is as follows. Catalyzes the pyruvoyl-dependent decarboxylation of aspartate to produce beta-alanine. This Nocardia farcinica (strain IFM 10152) protein is Aspartate 1-decarboxylase.